The chain runs to 460 residues: Oxysterols receptor LXR-beta (460 aa).

The segment covering Met-1 to Pro-14 has biased composition (low complexity). Residues Met-1–Ala-78 form a disordered region. The segment at Met-1–Glu-85 is transactivation AF-1; required for ligand-independent transactivation function. Pro residues predominate over residues Glu-36 to Asp-45. The segment at residues His-84–Ser-161 is a DNA-binding region (nuclear receptor). NR C4-type zinc fingers lie at residues Cys-87–Cys-107 and Cys-125–Cys-149. The disordered stretch occupies residues Lys-169–Gly-216. Positions Gln-175–Gly-198 are enriched in low complexity. The segment covering Ala-199 to Glu-215 has biased composition (gly residues). Residues Leu-219–Glu-460 form a transactivation AF-2; required for ligand-dependent transactivation function; mediates interaction with CCAR2 region. The NR LBD domain maps to Ala-222–Glu-460. Glycyl lysine isopeptide (Lys-Gly) (interchain with G-Cter in SUMO2) cross-links involve residues Lys-409 and Lys-447.

Belongs to the nuclear hormone receptor family. NR1 subfamily. As to quaternary structure, forms a heterodimer with RXR. Interacts with CCAR2 (via N-terminus) in a ligand-independent manner. Interacts (when sumoylated) with GPS2; interaction with GPS2 onto hepatic acute phase protein promoters prevents N-Cor corepressor complex dissociation. Interacts with ABCA12 and ABCA1; this interaction is required for ABCA1 localization to the cell surface and is necessary for its normal activity and stability. Post-translationally, sumoylated by SUMO2 at Lys-409 and Lys-447 during the hepatic acute phase response, leading to promote interaction with GPS2 and prevent N-Cor corepressor complex dissociation. As to expression, ubiquitous.

It is found in the nucleus. Its function is as follows. Nuclear receptor that exhibits a ligand-dependent transcriptional activation activity. Binds preferentially to double-stranded oligonucleotide direct repeats having the consensus half-site sequence 5'-AGGTCA-3' and 4-nt spacing (DR-4). Regulates cholesterol uptake through MYLIP-dependent ubiquitination of LDLR, VLDLR and LRP8; DLDLR and LRP8. Interplays functionally with RORA for the regulation of genes involved in liver metabolism. Induces LPCAT3-dependent phospholipid remodeling in endoplasmic reticulum (ER) membranes of hepatocytes, driving SREBF1 processing and lipogenesis. Via LPCAT3, triggers the incorporation of arachidonate into phosphatidylcholines of ER membranes, increasing membrane dynamics and enabling triacylglycerols transfer to nascent very low-density lipoprotein (VLDL) particles. Via LPCAT3 also counteracts lipid-induced ER stress response and inflammation, likely by modulating SRC kinase membrane compartmentalization and limiting the synthesis of lipid inflammatory mediators. Plays an anti-inflammatory role during the hepatic acute phase response by acting as a corepressor: inhibits the hepatic acute phase response by preventing dissociation of the N-Cor corepressor complex. This Homo sapiens (Human) protein is Oxysterols receptor LXR-beta (NR1H2).